We begin with the raw amino-acid sequence, 142 residues long: UPF0336 protein PPA1896 (142 aa).

The protein belongs to the UPF0336 family.

In Cutibacterium acnes (strain DSM 16379 / KPA171202) (Propionibacterium acnes), this protein is UPF0336 protein PPA1896.